The following is a 387-amino-acid chain: MKKLLLLLGLVALSECLYKVPLVKKKSLRQNLIENGLLKDFLAKHNVNPASKYFPTEAATELADQPLVNYMDMEYFGTIGIGTPPQEFTVIFDTGSSNLWVPSVYCSSPACSNHNRFNPQKSSTFQSTSQTLSIAYGTGSMTGVLGYDTVQVAGIADTNQIFGLSQTEPGSFLYYSPFDGILGLAYPNIASSGATPVFDNMWNQGLVSQDLFSVYLSSNDQSGSVVIFGGIDSSYYTGNLNWVPLSSEGYWQITVDSITMNGQAIACSGSCQAIVDTGTSLLSGPNNAIANIQKSIGASQNANGQMVVSCSSIQSLPDIVFTINGIQYPLPASAYILQNQQDCTSGFQGMDIPTPSGELWILGDVFIRQYFAVFDRGNNRVGLAPVA.

The N-terminal stretch at 1-16 (MKKLLLLLGLVALSEC) is a signal peptide. The propeptide at 17–61 (LYKVPLVKKKSLRQNLIENGLLKDFLAKHNVNPASKYFPTEAATE) is activation peptide. The 310-residue stretch at 75–384 (YFGTIGIGTP…DRGNNRVGLA (310 aa)) folds into the Peptidase A1 domain. The active site involves Asp93. A disulfide bridge connects residues Cys106 and Cys111. Residue Ser129 is modified to Phosphoserine. A disulfide bond links Cys267 and Cys271. Asp276 is a catalytic residue. Cys310 and Cys343 are joined by a disulfide.

Belongs to the peptidase A1 family.

The protein localises to the secreted. It catalyses the reaction Preferential cleavage: hydrophobic, preferably aromatic, residues in P1 and P1' positions. Cleaves 1-Phe-|-Val-2, 4-Gln-|-His-5, 13-Glu-|-Ala-14, 14-Ala-|-Leu-15, 15-Leu-|-Tyr-16, 16-Tyr-|-Leu-17, 23-Gly-|-Phe-24, 24-Phe-|-Phe-25 and 25-Phe-|-Tyr-26 bonds in the B chain of insulin.. In terms of biological role, shows particularly broad specificity; although bonds involving phenylalanine and leucine are preferred, many others are also cleaved to some extent. The polypeptide is Pepsin A (PGA) (Suncus murinus (Asian house shrew)).